A 160-amino-acid chain; its full sequence is uncharacterized protein (160 aa).

This is an uncharacterized protein from Lactobacillus helveticus (Lactobacillus suntoryeus).